The chain runs to 154 residues: SsrA-binding protein (154 aa).

Positions 126-154 (GKKKYDKREDMKKKEAQREVERAFRERQK) are disordered. Positions 131-154 (DKREDMKKKEAQREVERAFRERQK) are enriched in basic and acidic residues.

The protein belongs to the SmpB family.

It is found in the cytoplasm. Functionally, required for rescue of stalled ribosomes mediated by trans-translation. Binds to transfer-messenger RNA (tmRNA), required for stable association of tmRNA with ribosomes. tmRNA and SmpB together mimic tRNA shape, replacing the anticodon stem-loop with SmpB. tmRNA is encoded by the ssrA gene; the 2 termini fold to resemble tRNA(Ala) and it encodes a 'tag peptide', a short internal open reading frame. During trans-translation Ala-aminoacylated tmRNA acts like a tRNA, entering the A-site of stalled ribosomes, displacing the stalled mRNA. The ribosome then switches to translate the ORF on the tmRNA; the nascent peptide is terminated with the 'tag peptide' encoded by the tmRNA and targeted for degradation. The ribosome is freed to recommence translation, which seems to be the essential function of trans-translation. The protein is SsrA-binding protein of Anoxybacillus flavithermus (strain DSM 21510 / WK1).